Here is a 153-residue protein sequence, read N- to C-terminus: NADPH-dependent 7-cyano-7-deazaguanine reductase (153 aa).

The active-site Thioimide intermediate is the C51. The active-site Proton donor is the D58. Substrate contacts are provided by residues 73 to 75 (LES) and 92 to 93 (HE).

It belongs to the GTP cyclohydrolase I family. QueF type 1 subfamily.

The protein resides in the cytoplasm. It carries out the reaction 7-aminomethyl-7-carbaguanine + 2 NADP(+) = 7-cyano-7-deazaguanine + 2 NADPH + 3 H(+). It functions in the pathway tRNA modification; tRNA-queuosine biosynthesis. In terms of biological role, catalyzes the NADPH-dependent reduction of 7-cyano-7-deazaguanine (preQ0) to 7-aminomethyl-7-deazaguanine (preQ1). The chain is NADPH-dependent 7-cyano-7-deazaguanine reductase from Bradyrhizobium diazoefficiens (strain JCM 10833 / BCRC 13528 / IAM 13628 / NBRC 14792 / USDA 110).